Consider the following 66-residue polypeptide: Large ribosomal subunit protein bL33c (66 aa).

Belongs to the bacterial ribosomal protein bL33 family.

The protein resides in the plastid. It localises to the chloroplast. The sequence is that of Large ribosomal subunit protein bL33c from Solanum bulbocastanum (Wild potato).